We begin with the raw amino-acid sequence, 248 residues long: Tyrosine recombinase XerD-like (248 aa).

In terms of domain architecture, Core-binding (CB) spans 1-72 (MKSYIEPFIA…TANQFLYYLY (72 aa)). The region spanning 85–248 (DTMKVMRTEK…PVTLEKYYKS (164 aa)) is the Tyr recombinase domain. Residues lysine 149 and arginine 213 contribute to the active site. The O-(3'-phospho-DNA)-tyrosine intermediate role is filled by tyrosine 245.

It belongs to the 'phage' integrase family. XerD-like subfamily.

Its subcellular location is the cytoplasm. Putative tyrosine recombinase. Not involved in the cutting and rejoining of the recombining DNA molecules on dif(SL) site. In Streptococcus pyogenes serotype M18 (strain MGAS8232), this protein is Tyrosine recombinase XerD-like.